A 107-amino-acid chain; its full sequence is Phosphoribosyl-ATP pyrophosphatase (107 aa).

The protein belongs to the PRA-PH family.

It is found in the cytoplasm. The enzyme catalyses 1-(5-phospho-beta-D-ribosyl)-ATP + H2O = 1-(5-phospho-beta-D-ribosyl)-5'-AMP + diphosphate + H(+). It functions in the pathway amino-acid biosynthesis; L-histidine biosynthesis; L-histidine from 5-phospho-alpha-D-ribose 1-diphosphate: step 2/9. This Bacillus anthracis (strain A0248) protein is Phosphoribosyl-ATP pyrophosphatase.